A 168-amino-acid polypeptide reads, in one-letter code: WAP four-disulfide core domain protein 2 (168 aa).

The signal sequence occupies residues Met1–Ala30. 2 consecutive WAP domains span residues Glu31 to Asn74 and Asn119 to Lys167. 4 cysteine pairs are disulfide-bonded: Cys36–Cys62, Cys45–Cys66, Cys49–Cys61, and Cys55–Cys70. The interval Pro100–Gln123 is disordered. Intrachain disulfides connect Cys126–Cys154, Cys137–Cys158, Cys141–Cys153, and Cys147–Cys163.

Homotrimer; disulfide-linked.

It is found in the secreted. Functionally, broad range protease inhibitor. The chain is WAP four-disulfide core domain protein 2 (Wfdc2) from Rattus norvegicus (Rat).